A 184-amino-acid chain; its full sequence is Cysteine-rich atrial secretory protein (184 aa).

Positions 1-26 (MATFQAHFFAAVMCVGVLGLSKLCGA) are cleaved as a signal peptide. 5 disulfides stabilise this stretch: C29–C34, C65–C111, C75–C82, C123–C155, and C135–C144. An N-linked (GlcNAc...) asparagine glycan is attached at N74.

In terms of processing, N-glycosylated. As to expression, highly expressed in atrium. Moderately expressed in the pericardium, pulmonary vein, nephridium, arteria anterior, ovotestis and connective tissue. Low expression found in intestine, lung plexus, diaphragm, subesophageal ganglion, ventricle and digestive gland. Very low expression found in columellar retractor, pedal nerves and cerebral ganglion. Not expressed in hemocytes.

It localises to the secreted. The protein is Cysteine-rich atrial secretory protein of Achatina achatina (Giant Ghana snail).